Reading from the N-terminus, the 633-residue chain is Chaperone protein HtpG (633 aa).

The a; substrate-binding stretch occupies residues 1 to 341 (MSATSSKETL…SADLPLNVSR (341 aa)). The tract at residues 342-558 (EILQSSRDID…EGDMSANLER (217 aa)) is b. Residues 559 to 633 (LLKAAGQAAP…LNGLLAMLPG (75 aa)) form a c region.

The protein belongs to the heat shock protein 90 family. Homodimer.

It localises to the cytoplasm. Functionally, molecular chaperone. Has ATPase activity. The polypeptide is Chaperone protein HtpG (Thiobacillus denitrificans (strain ATCC 25259 / T1)).